Consider the following 299-residue polypeptide: MADKKLVVVFGATGAQGGSVARTLLEDGTFRVRVVTRDPGQRAAKQLRLQGAEVVQGDQDDEASMELALSGAHATFIVTNYWENCSQEQEVKQGKLLADLAKRLGLRYVVYSGLENIKKLTAGRLTVGHFDGKGEVEEYFRDIGVPMTSVRLPCYFENLLSYFLPQKAPDGRSYLLSLPMGDVPIDGMSVADLGPVVLSLLKTPEEYVGRNIGLSTCRHTVEEYAALLTKHTGKAVRDAKTSPEDYEKLGFPGAQDLANMFRFYALKPDRNIELTLKLNPKARRLDQWLEQHKEDFAGL.

NADP(+) contacts are provided by residues 11-16 (GATGAQ), 37-41 (RDPGQ), 58-59 (DQ), 79-81 (TNY), lysine 92, lysine 133, and 155-158 (YFEN). Residues 153–189 (PCYFENLLSYFLPQKAPDGRSYLLSLPMGDVPIDGMS) form an interaction with ASS1 region.

The protein belongs to the NmrA-type oxidoreductase family. As to quaternary structure, homodimer. Interacts with ASS1. Interaction is enhanced by low NADPH/NADP(+) ratios, which results in inhibition of ASS1 activity.

The protein localises to the cytoplasm. Its subcellular location is the perinuclear region. The protein resides in the nucleus. Redox sensor protein. Undergoes restructuring and subcellular redistribution in response to changes in intracellular NADPH/NADP(+) levels. At low NADPH concentrations the protein is found mainly as a monomer, and binds argininosuccinate synthase (ASS1), the enzyme involved in nitric oxide synthesis. Association with ASS1 impairs its activity and reduces the production of nitric oxide, which subsecuently prevents apoptosis. Under normal NADPH concentrations, the protein is found as a dimer and hides the binding site for ASS1. The homodimer binds one molecule of NADPH. Has higher affinity for NADPH than for NADP(+). Binding to NADPH is necessary to form a stable dimer. The chain is NmrA-like family domain-containing protein 1 (NMRAL1) from Bos taurus (Bovine).